Reading from the N-terminus, the 84-residue chain is Putative membrane protein insertion efficiency factor (84 aa).

It belongs to the UPF0161 family.

The protein localises to the cell inner membrane. Could be involved in insertion of integral membrane proteins into the membrane. The polypeptide is Putative membrane protein insertion efficiency factor (Shewanella amazonensis (strain ATCC BAA-1098 / SB2B)).